Here is a 230-residue protein sequence, read N- to C-terminus: Lipoprotein-releasing system ATP-binding protein LolD (230 aa).

One can recognise an ABC transporter domain in the interval L6–L230. G42–S49 serves as a coordination point for ATP.

This sequence belongs to the ABC transporter superfamily. Lipoprotein translocase (TC 3.A.1.125) family. In terms of assembly, the complex is composed of two ATP-binding proteins (LolD) and two transmembrane proteins (LolC and LolE).

The protein resides in the cell inner membrane. Its function is as follows. Part of the ABC transporter complex LolCDE involved in the translocation of mature outer membrane-directed lipoproteins, from the inner membrane to the periplasmic chaperone, LolA. Responsible for the formation of the LolA-lipoprotein complex in an ATP-dependent manner. This is Lipoprotein-releasing system ATP-binding protein LolD from Hydrogenovibrio crunogenus (strain DSM 25203 / XCL-2) (Thiomicrospira crunogena).